The sequence spans 227 residues: ATP synthase F(0) complex subunit a (227 aa).

6 helical membrane passes run 14–34, 69–89, 98–118, 139–159, 165–185, and 189–209; these read FLGI…FPSP, WAMI…LGLL, QLSM…LIGM, IPIL…ALGV, LTAG…MLSI, and IATL…AVAM.

The protein belongs to the ATPase A chain family. Component of the ATP synthase complex composed at least of ATP5F1A/subunit alpha, ATP5F1B/subunit beta, ATP5MC1/subunit c (homooctomer), MT-ATP6/subunit a, MT-ATP8/subunit 8, ATP5ME/subunit e, ATP5MF/subunit f, ATP5MG/subunit g, ATP5MK/subunit k, ATP5MJ/subunit j, ATP5F1C/subunit gamma, ATP5F1D/subunit delta, ATP5F1E/subunit epsilon, ATP5PF/subunit F6, ATP5PB/subunit b, ATP5PD/subunit d, ATP5PO/subunit OSCP. ATP synthase complex consists of a soluble F(1) head domain (subunits alpha(3) and beta(3)) - the catalytic core - and a membrane F(0) domain - the membrane proton channel (subunits c, a, 8, e, f, g, k and j). These two domains are linked by a central stalk (subunits gamma, delta, and epsilon) rotating inside the F1 region and a stationary peripheral stalk (subunits F6, b, d, and OSCP). Interacts with DNAJC30; interaction is direct.

The protein localises to the mitochondrion inner membrane. The enzyme catalyses H(+)(in) = H(+)(out). Its function is as follows. Subunit a, of the mitochondrial membrane ATP synthase complex (F(1)F(0) ATP synthase or Complex V) that produces ATP from ADP in the presence of a proton gradient across the membrane which is generated by electron transport complexes of the respiratory chain. ATP synthase complex consist of a soluble F(1) head domain - the catalytic core - and a membrane F(1) domain - the membrane proton channel. These two domains are linked by a central stalk rotating inside the F(1) region and a stationary peripheral stalk. During catalysis, ATP synthesis in the catalytic domain of F(1) is coupled via a rotary mechanism of the central stalk subunits to proton translocation. With the subunit c (ATP5MC1), forms the proton-conducting channel in the F(0) domain, that contains two crucial half-channels (inlet and outlet) that facilitate proton movement from the mitochondrial intermembrane space (IMS) into the matrix. Protons are taken up via the inlet half-channel and released through the outlet half-channel, following a Grotthuss mechanism. This is ATP synthase F(0) complex subunit a from Polypterus ornatipinnis (Ornate bichir).